A 43-amino-acid chain; its full sequence is Alpha-conotoxin-like Leo-A1 (43 aa).

Residues 1–26 constitute a propeptide that is removed on maturation; that stretch reads LTLDRASDDTDVAAEIMSGLIALAID. Disulfide bonds link Cys-28-Cys-34 and Cys-29-Cys-42. Residues 30-32 are lacks the Ser-Xaa-Pro motif that is crucial for potent interaction with nAChR; it reads SDS.

The protein belongs to the conotoxin A superfamily. In terms of tissue distribution, expressed by the venom duct.

The protein resides in the secreted. In terms of biological role, alpha-conotoxins act on postsynaptic membranes, they bind to the nicotinic acetylcholine receptors (nAChR) and thus inhibit them. Has possibly a distinct nAChR binding mode from other alpha-conotoxins, due to a different three residue motif (lacks the Ser-Xaa-Pro motif). The protein is Alpha-conotoxin-like Leo-A1 of Conus leopardus (Leopard cone).